A 135-amino-acid polypeptide reads, in one-letter code: MKLLDTTVLLDFLSGEEEKVETIEQFFEELSQKGEKLFVPEEVIIELVYFLEHGYKWEREDIYEVVETILNDELFNVELKPFIREAIKLYSKRQGTFLDCLKSVKAKKMGIKEVVSFGRRFKKLGFKTVNPYEES.

The 128-residue stretch at Leu3–Asn130 folds into the PINc domain. Residue Asp5 participates in Mg(2+) binding.

Belongs to the PINc/VapC protein family. It depends on Mg(2+) as a cofactor.

In terms of biological role, toxic component of a type II toxin-antitoxin (TA) system. An RNase. This is VapC ribonuclease aq_1901 from Aquifex aeolicus (strain VF5).